A 3184-amino-acid polypeptide reads, in one-letter code: Probable serine/threonine-protein kinase pats1 (3184 aa).

Over residues 369–378 (DPPPPPPSNS) the composition is skewed to pro residues. 2 disordered regions span residues 369-516 (DPPP…QIPP) and 913-1013 (SITR…TSIL). The span at 379 to 415 (SPPISKSTSNNNLNVSNYHNNNNNNNNSNSNLSNSGN) shows a compositional bias: low complexity. Over residues 421–450 (DFQSQNLVKSYNRENSGNSLNSMLHQTSLP) the composition is skewed to polar residues. The span at 451–512 (NNNNSNVVNN…NNNNSNNNNS (62 aa)) shows a compositional bias: low complexity. Residues 842 to 1348 (CFPDHSLLQE…FQDTMWNEYF (507 aa)) form the Myotubularin phosphatase domain. Residues 913–934 (SITRATSPEDQNNGSSNYLLTP) are compositionally biased toward polar residues. Low complexity predominate over residues 935–993 (NSPNSSSSNLANNNNSNNNNINNNNNNNNNNNNNNNNNSNNNNNNNNNNNNNNNNNNNN). Polar residues predominate over residues 1000-1013 (SRSTTIDNGQTSIL). LRR repeat units lie at residues 1391–1412 (FLETLDLSNLRLYYLPSESTLY), 1416–1438 (GLRELNLSKNNLNSISCSLSSLV), 1439–1460 (KLEKLSFEENSITNLPIETVVL), 1467–1488 (SLTELNLSSNQLIDLPIEFSMF), 1491–1512 (SLKKLHLKNNRFSAIPEVLGML), 1514–1535 (NLIELDLSELDLSSSTNSGVGI), 1541–1563 (KLCILNLNQTRIVELPKEFGDLK), 1564–1585 (SLEKLYLDFNSLVTLPHSFRQL), 1587–1608 (NLEELSLSFNSMTELPREVCFL), 1610–1631 (NLKKLMIEGNQIQFLPNEISQL), 1633–1654 (KLMILNVCKNKLDSLPASIGQL), 1656–1678 (QLVSLNLNNNSQLVSLRPTMGLL), and 1680–1701 (NLVELKLDGTRLKTPPPEIVSL). Residues 1716–1910 (GQEQCYKMKL…EKLEALVQSQ (195 aa)) form the Roc domain. Residues 1716 to 1910 (GQEQCYKMKL…EKLEALVQSQ (195 aa)) are small GTPase-like. GTP is bound by residues 1729-1736 (GQENVGKT), 1797-1801 (DFAGQ), and 1854-1857 (THLD). Residues 1918-2127 (PRSYMLLENL…KCYWKNGMIL (210 aa)) enclose the COR domain. Positions 2247-2519 (LMIEELIGEG…RLIKIAEAMF (273 aa)) constitute a Protein kinase domain. Residues 2253 to 2261 (IGEGGAALV) and Lys-2274 each bind ATP. The Proton acceptor role is filled by Asp-2379. Disordered regions lie at residues 2528–2609 (YQQQ…TISH) and 2652–2671 (NSINNSNSNNEQPLSPNSLL). Residues 2529-2555 (QQQQQQQQQQQQSSPSKSSSTSPIIKS) show a composition bias toward low complexity. Residues 2556–2576 (LNLSTVSELGESSNQTPKQNI) show a composition bias toward polar residues. WD repeat units lie at residues 2745–2785 (PNQG…KYIQ), 2790–2829 (ANKDKKRIHCLYPYMNTVWCGSADDSITIWDIDTYQKIKS), 2909–2947 (AHERAIHAMIQVDDHVWTASSDGTIKVWSSTCQSVHTIE), 2949–2986 (AHSSRIFTLELVGDFVWSGSWDTTIKIWSTKDYHLVSE), and 2990–3040 (KHKD…NSRS). The span at 3055-3126 (GSSNSITNSN…NYYYSNNVNS (72 aa)) shows a compositional bias: low complexity. Positions 3055 to 3164 (GSSNSITNSN…TPPGSKGLMQ (110 aa)) are disordered. Over residues 3141-3157 (HEQTSPNSATPLSSTPP) the composition is skewed to polar residues.

It belongs to the protein kinase superfamily. TKL Ser/Thr protein kinase family. ROCO subfamily.

The catalysed reaction is L-seryl-[protein] + ATP = O-phospho-L-seryl-[protein] + ADP + H(+). The enzyme catalyses L-threonyl-[protein] + ATP = O-phospho-L-threonyl-[protein] + ADP + H(+). In terms of biological role, may act as a serine/threonine-protein kinase and guanine-nucleotide releasing factor. Essential regulator of cytokinesis involved in the binding to actomyosin cytoskeleton. The protein is Probable serine/threonine-protein kinase pats1 (pats1) of Dictyostelium discoideum (Social amoeba).